Reading from the N-terminus, the 525-residue chain is D-arabinono-1,4-lactone oxidase (525 aa).

Positions 23-197 (YSCRPQLYFQ…VKATIRVIPE (175 aa)) constitute an FAD-binding PCMH-type domain. Residue His-60 is modified to Pros-8alpha-FAD histidine.

It belongs to the oxygen-dependent FAD-linked oxidoreductase family. FAD is required as a cofactor.

Its subcellular location is the mitochondrion membrane. The enzyme catalyses D-arabinono-1,4-lactone + O2 = dehydro-D-arabinono-1,4-lactone + H2O2 + H(+). The protein operates within cofactor biosynthesis; D-erythroascorbate biosynthesis; dehydro-D-arabinono-1,4-lactone from D-arabinose: step 2/2. The protein is D-arabinono-1,4-lactone oxidase (ALO1) of Kluyveromyces lactis (strain ATCC 8585 / CBS 2359 / DSM 70799 / NBRC 1267 / NRRL Y-1140 / WM37) (Yeast).